We begin with the raw amino-acid sequence, 312 residues long: MAMKRKKISVIGAGFTGATTAFLLAQKELGDIVLVDIPQLENPTKGKALDMLESSPVLGFDANIVGTSDYADTADSDIVVITAGIARKPGMSRDDLVTTNQKIMKQVTKEVVKYSPNCYIIVLTNPVDAMSYTVFKESGFPKNRVIGQSGVLDTARFRTFVAQELNISVKDVTGFVLGGHGDDMVPLVRYSYAGGIPLEKLIPKDRLDAIVERTRKGGGEIVNLLGNGSAYYAPAASLAEMVEAIVKDQRRILPAITYLEGEYGYEGIYLGVPTILGGNGIEKVIELELTEDEKAALAKSLESVKNVMRVLE.

NAD(+) contacts are provided by residues 12-17 (GAGFTG) and aspartate 36. Substrate contacts are provided by arginine 87 and arginine 93. Residues asparagine 100 and 123 to 125 (LTN) each bind NAD(+). Asparagine 125 is a binding site for substrate. Serine 149 carries the post-translational modification Phosphoserine. Arginine 156 is a binding site for substrate. Histidine 180 functions as the Proton acceptor in the catalytic mechanism.

It belongs to the LDH/MDH superfamily. MDH type 3 family.

The enzyme catalyses (S)-malate + NAD(+) = oxaloacetate + NADH + H(+). In terms of biological role, catalyzes the reversible oxidation of malate to oxaloacetate. The sequence is that of Malate dehydrogenase from Geobacillus thermodenitrificans.